The primary structure comprises 242 residues: MKSKKELMDALNKLVITEICSIFPDIQRVWEDQEFQKKFASTIGVKPKDVTNVPKRNKSSYLFFCQEIRPSIVAEMPDIKPNQVMVHLGKKWSELPLEDRKKYDVMAVEDRKRYLASKEANKKLNKPVKISGYLQFCADERKIKLKFPDLTTKDITAKLGGMWNDYKKNNPQYLKSKYGYEIVEQHYDYEKNEIDKENIIPSSHRRKMVPSIPVSICSSNVKAIQELIGTTKSSKKNKEIKV.

2 DNA-binding regions (HMG box) span residues 54-122 (PKRN…EANK) and 126-197 (KPVK…IDKE).

It localises to the host nucleus. This Acheta domesticus (House cricket) protein is High mobility group protein homolog (EF1).